The following is a 103-amino-acid chain: NADH-quinone oxidoreductase subunit K (103 aa).

The next 3 membrane-spanning stretches (helical) occupy residues 5–25 (ISSY…GALT), 30–50 (VVVL…LVAF), and 66–86 (LFTM…LIAL).

It belongs to the complex I subunit 4L family. NDH-1 is composed of 14 different subunits. Subunits NuoA, H, J, K, L, M, N constitute the membrane sector of the complex.

It localises to the cell membrane. The catalysed reaction is a quinone + NADH + 5 H(+)(in) = a quinol + NAD(+) + 4 H(+)(out). Functionally, NDH-1 shuttles electrons from NADH, via FMN and iron-sulfur (Fe-S) centers, to quinones in the respiratory chain. The immediate electron acceptor for the enzyme in this species is believed to be a menaquinone. Couples the redox reaction to proton translocation (for every two electrons transferred, four hydrogen ions are translocated across the cytoplasmic membrane), and thus conserves the redox energy in a proton gradient. The polypeptide is NADH-quinone oxidoreductase subunit K (Brevibacillus brevis (strain 47 / JCM 6285 / NBRC 100599)).